Here is a 360-residue protein sequence, read N- to C-terminus: E3 ubiquitin-protein ligase RNF146 (360 aa).

The RING-type zinc-finger motif lies at 37–75 (CAICLQTCVHPVSLPCKHVFCYLCVKGASWLGKRCALCR). Glycyl lysine isopeptide (Lys-Gly) (interchain with G-Cter in ubiquitin) cross-links involve residues Lys85 and Lys95. The WWE domain maps to 92–168 (EELKAASRGN…EHGRRRKIKR (77 aa)). A glycoprotein-binding residues include Tyr108, Arg111, and Trp115. Residue Lys131 forms a Glycyl lysine isopeptide (Lys-Gly) (interchain with G-Cter in ubiquitin) linkage. The a glycoprotein site is built by Tyr145, Gln154, Arg164, and Lys176. Lys176 is covalently cross-linked (Glycyl lysine isopeptide (Lys-Gly) (interchain with G-Cter in ubiquitin)). Residues 259–360 (ERSHRGEGEE…PDGQCTVTEV (102 aa)) are disordered. Over residues 284 to 294 (SIEETESDASS) the composition is skewed to acidic residues. Ser290 and Ser294 each carry phosphoserine. Residues 295-305 (DSENVSSAVVA) show a composition bias toward low complexity. Residues 307–333 (HSLTQQRLLVSNANQTVSDRSDQSGTD) show a composition bias toward polar residues.

As to quaternary structure, can form homooligomers. Interacts with PARsylated AXIN1, AXIN2, BLZF1, CASC3, H1-2, IPO7, LIG3, NCL, PARP1, XRCC1, XRCC5 and XRCC6. Interacts with DDB1, DHX15, IQGAP1, LRPPRC, PARP2, PRKDC, RUVBL2, TNKS1 and TNKS2. Binding often leads to interactor ubiquitination, in the presence of the appropriate E1 and E2 enzymes, and proteasomal degradation. Ubiquitinated; autoubiquitinated. Autoubiquitination is enhanced upon poly(ADP-ribose)-binding.

Its subcellular location is the cytoplasm. It is found in the cytosol. The protein resides in the nucleus. The catalysed reaction is S-ubiquitinyl-[E2 ubiquitin-conjugating enzyme]-L-cysteine + [acceptor protein]-L-lysine = [E2 ubiquitin-conjugating enzyme]-L-cysteine + N(6)-ubiquitinyl-[acceptor protein]-L-lysine.. It participates in protein modification; protein ubiquitination. Its function is as follows. E3 ubiquitin-protein ligase that specifically binds poly-ADP-ribosylated (PARsylated) proteins and mediates their ubiquitination and subsequent degradation. May regulate many important biological processes, such as cell survival and DNA damage response. Acts as an activator of the Wnt signaling pathway by mediating the ubiquitination of PARsylated AXIN1 and AXIN2, 2 key components of the beta-catenin destruction complex. Acts in cooperation with tankyrase proteins (TNKS and TNKS2), which mediate PARsylation of target proteins AXIN1, AXIN2, BLZF1, CASC3, TNKS and TNKS2. Recognizes and binds tankyrase-dependent PARsylated proteins via its WWE domain and mediates their ubiquitination, leading to their degradation. Different ubiquitin linkage types have been observed: TNKS2 undergoes ubiquitination at 'Lys-48' and 'Lys-63', while AXIN1 is only ubiquitinated at 'Lys-48'. May regulate TNKS and TNKS2 subcellular location, preventing aggregation at a centrosomal location. Neuroprotective protein. Protects the brain against N-methyl-D-aspartate (NMDA) receptor-mediated glutamate excitotoxicity and ischemia, by interfering with PAR-induced cell death, called parthanatos. Prevents nuclear translocation of AIFM1 in a PAR-binding dependent manner. Does not affect PARP1 activation. Protects against cell death induced by DNA damaging agents, such as N-methyl-N-nitro-N-nitrosoguanidine (MNNG) and rescues cells from G1 arrest. Promotes cell survival after gamma-irradiation. Facilitates DNA repair. The polypeptide is E3 ubiquitin-protein ligase RNF146 (RNF146) (Macaca fascicularis (Crab-eating macaque)).